The primary structure comprises 290 residues: 2-dehydropantoate 2-reductase (290 aa).

NADP(+) is bound by residues 8 to 13, Asn-98, and Ala-124; that span reads GPGAVG. Asn-98 serves as a coordination point for substrate. The Proton donor role is filled by Lys-175. Positions 179 and 244 each coordinate substrate. Glu-256 contributes to the NADP(+) binding site.

Belongs to the ketopantoate reductase family.

Its subcellular location is the cytoplasm. The enzyme catalyses (R)-pantoate + NADP(+) = 2-dehydropantoate + NADPH + H(+). It participates in cofactor biosynthesis; (R)-pantothenate biosynthesis; (R)-pantoate from 3-methyl-2-oxobutanoate: step 2/2. Its function is as follows. Catalyzes the NADPH-dependent reduction of ketopantoate into pantoic acid. This chain is 2-dehydropantoate 2-reductase, found in Caulobacter vibrioides (strain ATCC 19089 / CIP 103742 / CB 15) (Caulobacter crescentus).